We begin with the raw amino-acid sequence, 46 residues long: AQLADSFHLQQFFRSQLLGSAHEVQRLAQFVEHWKKVEDLFLTFAK.

6 Spectrin repeats span residues 1 to 5 (AQLAD), 7 to 14 (FHLQQFFR), 15 to 20 (SQLLGS), 21 to 26 (AHEVQR), 27 to 35 (LAQFVEHWK), and 39 to 46 (DLFLTFAK).

This sequence belongs to the spectrin family. Associates with the gamma-tubulin complex in brain, but not in kidney, liver, sperm, or uterus. Like erythrocyte spectrin, the spectrin-like proteins are capable of forming dimers which can further associate to tetramers. Interacts with isoform 1 of ACP1. Interacts with CALM and EMD. Interacts (via C-terminal spectrin repeats) with TRPC4. Identified in a complex with ACTN4, CASK, IQGAP1, MAGI2, NPHS1 and SPTBN1. Interacts with CLN3; this interaction regulates the fodrin localization at the plasma membrane.

Its subcellular location is the cytoplasm. It is found in the cytoskeleton. It localises to the cell cortex. Functionally, fodrin, which seems to be involved in secretion, interacts with calmodulin in a calcium-dependent manner and is thus candidate for the calcium-dependent movement of the cytoskeleton at the membrane. The chain is Spectrin alpha chain, non-erythrocytic 1 (SPTAN1) from Capra hircus (Goat).